A 166-amino-acid chain; its full sequence is Protein TIFY 11e (166 aa).

Residues 65 to 100 enclose the Tify domain; the sequence is ASSAAAQMTIFYGGRVLVLDECPADRAAALLRLAAS. The Jas motif lies at 123-148; the sequence is PVARKASLQRFMEKRKGRLAARGQPY. Residues 125–132 carry the Nuclear localization signal motif; sequence ARKASLQR.

It belongs to the TIFY/JAZ family. Post-translationally, ubiquitinated. Targeted for degradation by the SCF(COI1) E3 ubiquitin ligase-proteasome pathway during jasmonate signaling.

The protein resides in the nucleus. Its function is as follows. Repressor of jasmonate responses. This is Protein TIFY 11e from Oryza sativa subsp. japonica (Rice).